Consider the following 337-residue polypeptide: tRNA N6-adenosine threonylcarbamoyltransferase (337 aa).

Positions 114 and 118 each coordinate Fe cation. Substrate contacts are provided by residues 136–140, D169, G182, D186, and N275; that span reads LVSGG. D301 contributes to the Fe cation binding site.

It belongs to the KAE1 / TsaD family. Requires Fe(2+) as cofactor.

The protein resides in the cytoplasm. It carries out the reaction L-threonylcarbamoyladenylate + adenosine(37) in tRNA = N(6)-L-threonylcarbamoyladenosine(37) in tRNA + AMP + H(+). Functionally, required for the formation of a threonylcarbamoyl group on adenosine at position 37 (t(6)A37) in tRNAs that read codons beginning with adenine. Is involved in the transfer of the threonylcarbamoyl moiety of threonylcarbamoyl-AMP (TC-AMP) to the N6 group of A37, together with TsaE and TsaB. TsaD likely plays a direct catalytic role in this reaction. This chain is tRNA N6-adenosine threonylcarbamoyltransferase, found in Streptococcus thermophilus (strain CNRZ 1066).